Here is a 363-residue protein sequence, read N- to C-terminus: MTSEQALLVLGIETTCDETAAAVVERRADGSGRLLSNIVRSQTDEHAPFGGVVPEIAARAHVDVLDGIIAAAMNEAGVAFASLSGVAAAAGPGLIGGVIVGLTTAKAIALVHGTPLIAVNHLEAHALTPRLTDSVEFPYCLFLASGGHTQIVAVLGVGNYVRLGTTVDDAIGEAFDKIAKMLGLPYPGGPQVERAAEAGDPNRFAFPRPMLGRQDANFSLSGLKTAVRNEAGKLTPLDPQDINDLCAGFQAAVLESVADRLGAGLRLFKERFGPPKALVAAGGAAANQAIRRMLREVAAKVQTTLIVPPPALCTDNGAMIAWAGAERLALGLTDTMDTAPRARWLLDANATAPAKFANTRAGF.

Fe cation is bound by residues His-121 and His-125. Substrate contacts are provided by residues 143 to 147, Asp-176, Gly-189, and Asn-287; that span reads LASGG. Asp-315 provides a ligand contact to Fe cation.

This sequence belongs to the KAE1 / TsaD family. It depends on Fe(2+) as a cofactor.

The protein localises to the cytoplasm. It carries out the reaction L-threonylcarbamoyladenylate + adenosine(37) in tRNA = N(6)-L-threonylcarbamoyladenosine(37) in tRNA + AMP + H(+). Functionally, required for the formation of a threonylcarbamoyl group on adenosine at position 37 (t(6)A37) in tRNAs that read codons beginning with adenine. Is involved in the transfer of the threonylcarbamoyl moiety of threonylcarbamoyl-AMP (TC-AMP) to the N6 group of A37, together with TsaE and TsaB. TsaD likely plays a direct catalytic role in this reaction. This Rhodopseudomonas palustris (strain ATCC BAA-98 / CGA009) protein is tRNA N6-adenosine threonylcarbamoyltransferase.